A 302-amino-acid chain; its full sequence is Acidic endochitinase (302 aa).

The signal sequence occupies residues 1-30; the sequence is MTNMTLRKHVIYFLFFISCSLSKPSDASRG. In terms of domain architecture, GH18 spans 31–302; sequence GIAIYWGQNG…GYSSSILASV (272 aa). 2 disulfide bridges follow: Cys49-Cys96 and Cys79-Cys86. Glu156 functions as the Proton donor in the catalytic mechanism. Cysteines 188 and 217 form a disulfide.

It belongs to the glycosyl hydrolase 18 family. Chitinase class III subfamily.

It localises to the secreted. The protein resides in the extracellular space. It catalyses the reaction Random endo-hydrolysis of N-acetyl-beta-D-glucosaminide (1-&gt;4)-beta-linkages in chitin and chitodextrins.. Its function is as follows. This protein functions as a defense against chitin containing fungal pathogens. This is Acidic endochitinase (CHIB1) from Arabidopsis thaliana (Mouse-ear cress).